Consider the following 222-residue polypeptide: UPF0502 protein Shewmr4_1554 (222 aa).

Polar residues predominate over residues 175–193 (SLSADSPSAGSNSLNAQDR). The interval 175–194 (SLSADSPSAGSNSLNAQDRQ) is disordered.

This sequence belongs to the UPF0502 family.

The polypeptide is UPF0502 protein Shewmr4_1554 (Shewanella sp. (strain MR-4)).